We begin with the raw amino-acid sequence, 258 residues long: F-box/LRR-repeat protein 25 (258 aa).

The 50-residue stretch at 27-76 (SDSISNLPDEILHHILSFIPETNLVIRTSVLSKRWRHVWSKTPHLSFEWL) folds into the F-box domain. 4 LRR repeats span residues 101-130 (CTSY…SLAF), 136-161 (CNKF…SLTP), 177-202 (RCNL…SLKF), and 224-249 (RRSC…RLRD).

The chain is F-box/LRR-repeat protein 25 (FBL25) from Arabidopsis thaliana (Mouse-ear cress).